The sequence spans 353 residues: ATP-dependent kinase YFH7 (353 aa).

31 to 39 (GSPGSGKST) is a binding site for ATP.

Belongs to the YFH7 family.

In terms of biological role, ATP-dependent kinase that could be involved in endoplasmic reticulum membrane assembly. In Saccharomyces cerevisiae (strain Lalvin EC1118 / Prise de mousse) (Baker's yeast), this protein is ATP-dependent kinase YFH7 (YFH7).